Here is a 359-residue protein sequence, read N- to C-terminus: Methylthioribose-1-phosphate isomerase (359 aa).

Substrate-binding positions include 50 to 52, R93, and Q200; that span reads RGA. D241 (proton donor) is an active-site residue. 251 to 252 is a substrate binding site; the sequence is NK.

Belongs to the eIF-2B alpha/beta/delta subunits family. MtnA subfamily.

The enzyme catalyses 5-(methylsulfanyl)-alpha-D-ribose 1-phosphate = 5-(methylsulfanyl)-D-ribulose 1-phosphate. The protein operates within amino-acid biosynthesis; L-methionine biosynthesis via salvage pathway; L-methionine from S-methyl-5-thio-alpha-D-ribose 1-phosphate: step 1/6. Functionally, catalyzes the interconversion of methylthioribose-1-phosphate (MTR-1-P) into methylthioribulose-1-phosphate (MTRu-1-P). This is Methylthioribose-1-phosphate isomerase from Symbiobacterium thermophilum (strain DSM 24528 / JCM 14929 / IAM 14863 / T).